Here is a 365-residue protein sequence, read N- to C-terminus: Ribosomal RNA large subunit methyltransferase M (365 aa).

Residues S194, 227-230 (CPGG), D246, D266, and D284 each bind S-adenosyl-L-methionine. Residue K313 is the Proton acceptor of the active site.

The protein belongs to the class I-like SAM-binding methyltransferase superfamily. RNA methyltransferase RlmE family. RlmM subfamily. Monomer.

The protein resides in the cytoplasm. It catalyses the reaction cytidine(2498) in 23S rRNA + S-adenosyl-L-methionine = 2'-O-methylcytidine(2498) in 23S rRNA + S-adenosyl-L-homocysteine + H(+). Its function is as follows. Catalyzes the 2'-O-methylation at nucleotide C2498 in 23S rRNA. In Pasteurella multocida (strain Pm70), this protein is Ribosomal RNA large subunit methyltransferase M.